Reading from the N-terminus, the 197-residue chain is Stanniocalcin-2 (197 aa).

Positions 1–20 are disordered; that stretch reads TDAXNPPEGPQDRGSQQKGR.

This sequence belongs to the stanniocalcin family. Homodimer; disulfide-linked.

The protein localises to the secreted. Has an anti-hypocalcemic action on calcium and phosphate homeostasis. This chain is Stanniocalcin-2 (STC2), found in Cavia porcellus (Guinea pig).